The sequence spans 353 residues: DNA-directed RNA polymerase subunit alpha (353 aa).

The alpha N-terminal domain (alpha-NTD) stretch occupies residues 1-226 (MLISQRPTLT…ELFGLARELN (226 aa)). Residues 241-353 (ADHIASFGLP…TEDYAETEQL (113 aa)) are alpha C-terminal domain (alpha-CTD). Residues 326-353 (ATGTWSDTDAGSFGDAEGTEDYAETEQL) are disordered. Over residues 342–353 (EGTEDYAETEQL) the composition is skewed to acidic residues.

This sequence belongs to the RNA polymerase alpha chain family. In terms of assembly, homodimer. The RNAP catalytic core consists of 2 alpha, 1 beta, 1 beta' and 1 omega subunit. When a sigma factor is associated with the core the holoenzyme is formed, which can initiate transcription.

The catalysed reaction is RNA(n) + a ribonucleoside 5'-triphosphate = RNA(n+1) + diphosphate. Functionally, DNA-dependent RNA polymerase catalyzes the transcription of DNA into RNA using the four ribonucleoside triphosphates as substrates. This chain is DNA-directed RNA polymerase subunit alpha, found in Rhodococcus jostii (strain RHA1).